Consider the following 159-residue polypeptide: 2-C-methyl-D-erythritol 2,4-cyclodiphosphate synthase (159 aa).

A divalent metal cation contacts are provided by aspartate 10 and histidine 12. Residues 10–12 (DVH) and 37–38 (HS) each bind 4-CDP-2-C-methyl-D-erythritol 2-phosphate. Residue histidine 45 participates in a divalent metal cation binding. Residues 59–61 (DIG), 64–68 (FLDTD), 103–109 (AQAPKML), 135–138 (TTTE), phenylalanine 142, and arginine 145 each bind 4-CDP-2-C-methyl-D-erythritol 2-phosphate.

Belongs to the IspF family. In terms of assembly, homotrimer. A divalent metal cation serves as cofactor.

The enzyme catalyses 4-CDP-2-C-methyl-D-erythritol 2-phosphate = 2-C-methyl-D-erythritol 2,4-cyclic diphosphate + CMP. It functions in the pathway isoprenoid biosynthesis; isopentenyl diphosphate biosynthesis via DXP pathway; isopentenyl diphosphate from 1-deoxy-D-xylulose 5-phosphate: step 4/6. Its function is as follows. Involved in the biosynthesis of isopentenyl diphosphate (IPP) and dimethylallyl diphosphate (DMAPP), two major building blocks of isoprenoid compounds. Catalyzes the conversion of 4-diphosphocytidyl-2-C-methyl-D-erythritol 2-phosphate (CDP-ME2P) to 2-C-methyl-D-erythritol 2,4-cyclodiphosphate (ME-CPP) with a corresponding release of cytidine 5-monophosphate (CMP). The polypeptide is 2-C-methyl-D-erythritol 2,4-cyclodiphosphate synthase (Francisella tularensis subsp. holarctica (strain FTNF002-00 / FTA)).